Reading from the N-terminus, the 105-residue chain is Protein RALF-like 21 (105 aa).

An N-terminal signal peptide occupies residues 1-30 (MSNMKITNRFMLVATFIACVFISSMNMTVG). 2 cysteine pairs are disulfide-bonded: Cys-44-Cys-53 and Cys-67-Cys-73.

Belongs to the plant rapid alkalinization factor (RALF) family. Expressed in seeds and rosettes.

Its subcellular location is the secreted. Cell signaling peptide that may regulate plant stress, growth, and development. Mediates a rapid alkalinization of extracellular space by mediating a transient increase in the cytoplasmic Ca(2+) concentration leading to a calcium-dependent signaling events through a cell surface receptor and a concomitant activation of some intracellular mitogen-activated protein kinases. The polypeptide is Protein RALF-like 21 (RALFL21) (Arabidopsis thaliana (Mouse-ear cress)).